A 783-amino-acid polypeptide reads, in one-letter code: Metabotropic glutamate receptor-like protein J (783 aa).

The signal sequence occupies residues 1-20 (MKILLYIAIILSFFSLITIS). Residues 21–383 (SECKIAVLLS…DYPNSLKYGV (363 aa)) lie on the Extracellular side of the membrane. The stretch at 56-85 (DFSIYYENLEESMEEAEKAFQDALHKGANL) forms a coiled coil. Asn181, Asn196, Asn256, Asn282, and Asn315 each carry an N-linked (GlcNAc...) asparagine glycan. Residues 384–404 (TIVSGVCIFICLVCMTLVVVF) form a helical membrane-spanning segment. At 405-415 (KKARVIKSSSP) the chain is on the cytoplasmic side. A helical membrane pass occupies residues 416–436 (AFLLLILLGCCIIFAACILFA). Residues 437 to 443 (QSPTNQT) are Extracellular-facing. N-linked (GlcNAc...) asparagine glycosylation is present at Asn441. The chain crosses the membrane as a helical span at residues 444–464 (CSARIWLLSLGYTLFLGNLLV). The Cytoplasmic segment spans residues 465–489 (KNWRIWLLFDNPKLKKRAITNWKLY). Residues 490–510 (PWVFAILAIDVMILAIWQGLG) traverse the membrane as a helical segment. The Extracellular segment spans residues 511-538 (NINAESRIGYDSLTQYQYKNVCSSDDQG). The chain crosses the membrane as a helical span at residues 539-559 (SIALYLLLVFHGLVLLVACFI). The Cytoplasmic segment spans residues 560 to 575 (SFKIKVVDIEEFNESK). A helical membrane pass occupies residues 576–596 (PITTSVYIITFCLFIVIPLMV). Topologically, residues 597-604 (SPQSLTSQ) are extracellular. The helical transmembrane segment at 605 to 625 (TTIICVCAIVTTLISMLLLFG) threads the bilayer. The Cytoplasmic segment spans residues 626 to 783 (SKFYKMATQG…GETEIDSNNV (158 aa)). Residues 647 to 656 (KSSSKSSKSS) are compositionally biased toward low complexity. 2 disordered regions span residues 647-696 (KSSS…FSNK) and 731-783 (QLQQ…SNNV). Residues 670–679 (GEDDTSDETS) show a composition bias toward acidic residues. Positions 763–783 (VLSKRISNQQNGETEIDSNNV) are enriched in polar residues.

It in the N-terminal section; belongs to the BMP lipoprotein family. This sequence in the C-terminal section; belongs to the G-protein coupled receptor 3 family. GABA-B receptor subfamily.

The protein localises to the cell membrane. The protein resides in the membrane. It localises to the endoplasmic reticulum membrane. It is found in the golgi apparatus membrane. Its subcellular location is the nucleus envelope. May act during the development and be a negative regulator. In Dictyostelium discoideum (Social amoeba), this protein is Metabotropic glutamate receptor-like protein J (grlJ).